A 923-amino-acid polypeptide reads, in one-letter code: Neuropilin-1a (923 aa).

The first 19 residues, 1-19 (MHCGLVLILFTGIFLIVSA), serve as a signal peptide directing secretion. Residues 20–856 (LKNDKCGDNI…AGNMLKTLDP (837 aa)) are Extracellular-facing. Intrachain disulfides connect Cys-25-Cys-52, Cys-80-Cys-102, and Cys-145-Cys-171. CUB domains lie at 25-139 (CGDN…YEIF) and 145-263 (CSRN…FTVL). Residue Asn-148 is glycosylated (N-linked (GlcNAc...) asparagine). Positions 193, 207, and 248 each coordinate Ca(2+). Cys-204 and Cys-226 are joined by a disulfide. N-linked (GlcNAc...) asparagine glycosylation occurs at Asn-259. Cystine bridges form between Cys-273–Cys-422 and Cys-429–Cys-581. 2 F5/8 type C domains span residues 273–422 (CTEP…VYGC) and 429–581 (CSGM…LLGC). An N-linked (GlcNAc...) asparagine glycan is attached at Asn-520. A disordered region spans residues 587-624 (TVPPTTPAASTTPSDECDDDQANCHSGTGDGYDQTGGT). A glycan (O-linked (Xyl...) (chondroitin sulfate) serine; alternate) is linked at Ser-612. O-linked (Xyl...) (heparan sulfate) serine; alternate glycosylation occurs at Ser-612. The region spanning 642-811 (FACDFGWAND…DNVNMADCKD (170 aa)) is the MAM domain. Residues 857–877 (ILITIIAMSALGVFLGAICGV) traverse the membrane as a helical segment. Topologically, residues 878–923 (VLYCACSHSGMSDRNLSALENYNFELVDGVKLKKDKLNSQNSYSEA) are cytoplasmic.

Belongs to the neuropilin family.

The protein resides in the membrane. Its function is as follows. Receptor involved in the development of the cardiovascular system, in angiogenesis, in the formation of certain neuronal circuits and in organogenesis outside the nervous system. It mediates the chemorepulsant activity of semaphorins. Regulates angiogenesis through a VEGF-dependent pathway. In Danio rerio (Zebrafish), this protein is Neuropilin-1a (nrp1a).